A 367-amino-acid chain; its full sequence is Leucine-rich repeat-containing protein 28 (367 aa).

LRR repeat units follow at residues 16-36, 42-63, 66-87, 89-110, 112-133, 135-156, 158-180, 181-202, and 204-226; these read KHKN…ELLK, YLER…LAQK, NLVE…IGSL, KLQC…IGRL, ALRH…VGDL, ELQT…LHMC, SLQY…CQLP, SLNE…LGRS, and ELQY…LYNK.

This is Leucine-rich repeat-containing protein 28 (LRRC28) from Homo sapiens (Human).